Consider the following 380-residue polypeptide: Cytochrome b (380 aa).

The next 4 membrane-spanning stretches (helical) occupy residues 33–53 (FGSL…FLAM), 77–98 (WLIR…YMHI), 113–133 (WNIG…GYVL), and 178–198 (FFAF…LHLL). The heme b site is built by H83 and H97. Residues H182 and H196 each coordinate heme b. H201 contacts a ubiquinone. Helical transmembrane passes span 226–246 (YKDL…ALFA), 288–308 (LGGV…PILH), 320–340 (LTQF…WIGG), and 347–367 (FIII…VLSP).

It belongs to the cytochrome b family. As to quaternary structure, the cytochrome bc1 complex contains 3 respiratory subunits (MT-CYB, CYC1 and UQCRFS1), 2 core proteins (UQCRC1 and UQCRC2) and probably 6 low-molecular weight proteins. Heme b serves as cofactor.

The protein resides in the mitochondrion inner membrane. Component of the ubiquinol-cytochrome c reductase complex (complex III or cytochrome b-c1 complex) that is part of the mitochondrial respiratory chain. The b-c1 complex mediates electron transfer from ubiquinol to cytochrome c. Contributes to the generation of a proton gradient across the mitochondrial membrane that is then used for ATP synthesis. This Oncorhynchus mykiss (Rainbow trout) protein is Cytochrome b (mt-cyb).